A 270-amino-acid chain; its full sequence is MSGTKIHPTALVEKGAQLGENVRVGPFCHISSEAVIGDECSLTSHVVIMGKTMLGAKSKVFSHAVLGADPQNNKHKGGATILSIGKNCMIREGVTMHRGSDSSTGMTVVGDNCQFFCYAHIAHDCHVGNHVTFANNAMIAGHVTVGDYVIIGGGAAVHQFVRVGHHAFIGGVSALVGDLIPYGTAVGVQAKLAGLNIIGMKRAGLERQDIHALRHAVAMLFDHSKPFKERVNDVASCYSSSRSVADVVRFIKEEGKRFYCTPKFGGDRIK.

The protein belongs to the transferase hexapeptide repeat family. LpxA subfamily. As to quaternary structure, homotrimer.

Its subcellular location is the cytoplasm. It catalyses the reaction a (3R)-hydroxyacyl-[ACP] + UDP-N-acetyl-alpha-D-glucosamine = a UDP-3-O-[(3R)-3-hydroxyacyl]-N-acetyl-alpha-D-glucosamine + holo-[ACP]. It functions in the pathway glycolipid biosynthesis; lipid IV(A) biosynthesis; lipid IV(A) from (3R)-3-hydroxytetradecanoyl-[acyl-carrier-protein] and UDP-N-acetyl-alpha-D-glucosamine: step 1/6. Functionally, involved in the biosynthesis of lipid A, a phosphorylated glycolipid that anchors the lipopolysaccharide to the outer membrane of the cell. This chain is Acyl-[acyl-carrier-protein]--UDP-N-acetylglucosamine O-acyltransferase, found in Bartonella tribocorum (strain CIP 105476 / IBS 506).